The chain runs to 297 residues: D-alanine--D-alanine ligase (297 aa).

In terms of domain architecture, ATP-grasp spans 103 to 293 (KEILMHHRMP…FDSFVKSILE (191 aa)). An ATP-binding site is contributed by 129–180 (ISFPVAVKPSSGGSSIATFKVKSLEELENAYQQASKHGEVMIEQWVTGKEIT). The Mg(2+) site is built by aspartate 247, glutamate 260, and asparagine 262.

The protein belongs to the D-alanine--D-alanine ligase family. Mg(2+) is required as a cofactor. The cofactor is Mn(2+).

Its subcellular location is the cytoplasm. It catalyses the reaction 2 D-alanine + ATP = D-alanyl-D-alanine + ADP + phosphate + H(+). It functions in the pathway cell wall biogenesis; peptidoglycan biosynthesis. In terms of biological role, cell wall formation. In Francisella philomiragia subsp. philomiragia (strain ATCC 25017 / CCUG 19701 / FSC 153 / O#319-036), this protein is D-alanine--D-alanine ligase.